Consider the following 229-residue polypeptide: Ribonuclease 3 (229 aa).

Positions 5–127 (LSRLERQLGY…LIGAIYLDAG (123 aa)) constitute an RNase III domain. E40 contacts Mg(2+). The active site involves D44. 2 residues coordinate Mg(2+): D113 and E116. Residue E116 is part of the active site. The 71-residue stretch at 154-224 (DPKTRLQEFL…AAAALIALGV (71 aa)) folds into the DRBM domain.

Belongs to the ribonuclease III family. As to quaternary structure, homodimer. Requires Mg(2+) as cofactor.

The protein localises to the cytoplasm. It catalyses the reaction Endonucleolytic cleavage to 5'-phosphomonoester.. In terms of biological role, digests double-stranded RNA. Involved in the processing of primary rRNA transcript to yield the immediate precursors to the large and small rRNAs (23S and 16S). Processes some mRNAs, and tRNAs when they are encoded in the rRNA operon. Processes pre-crRNA and tracrRNA of type II CRISPR loci if present in the organism. The protein is Ribonuclease 3 of Pseudomonas syringae pv. tomato (strain ATCC BAA-871 / DC3000).